An 85-amino-acid polypeptide reads, in one-letter code: Putative defensin-like protein 258 (85 aa).

The N-terminal stretch at 1–25 (MINVSLKRSLLIFISVITSNIGSEA) is a signal peptide. Disulfide bonds link Cys-57/Cys-75, Cys-63/Cys-82, and Cys-67/Cys-84.

This sequence belongs to the DEFL family.

The protein localises to the secreted. This is Putative defensin-like protein 258 from Arabidopsis thaliana (Mouse-ear cress).